The following is a 443-amino-acid chain: 3-phosphoshikimate 1-carboxyvinyltransferase (443 aa).

K24, S25, and R29 together coordinate 3-phosphoshikimate. K24 is a phosphoenolpyruvate binding site. Phosphoenolpyruvate contacts are provided by G96 and R124. Residues S168, Q170, D316, and K343 each coordinate 3-phosphoshikimate. A phosphoenolpyruvate-binding site is contributed by Q170. D316 serves as the catalytic Proton acceptor. Positions 347 and 391 each coordinate phosphoenolpyruvate.

The protein belongs to the EPSP synthase family. As to quaternary structure, monomer.

The protein localises to the cytoplasm. It catalyses the reaction 3-phosphoshikimate + phosphoenolpyruvate = 5-O-(1-carboxyvinyl)-3-phosphoshikimate + phosphate. The protein operates within metabolic intermediate biosynthesis; chorismate biosynthesis; chorismate from D-erythrose 4-phosphate and phosphoenolpyruvate: step 6/7. Its function is as follows. Catalyzes the transfer of the enolpyruvyl moiety of phosphoenolpyruvate (PEP) to the 5-hydroxyl of shikimate-3-phosphate (S3P) to produce enolpyruvyl shikimate-3-phosphate and inorganic phosphate. In Dichelobacter nodosus (Bacteroides nodosus), this protein is 3-phosphoshikimate 1-carboxyvinyltransferase.